Reading from the N-terminus, the 308-residue chain is Putative ankyrin repeat protein R835 (308 aa).

ANK repeat units follow at residues 100–129 (DINE…NIDL), 152–181 (PMNK…YVDF), 190–217 (SEYT…GANY), 218–247 (KSSY…DLEK), 249–277 (GLRS…EIDY), and 279–305 (YYIY…SKQI).

The sequence is that of Putative ankyrin repeat protein R835 from Acanthamoeba polyphaga (Amoeba).